We begin with the raw amino-acid sequence, 317 residues long: tRNA dimethylallyltransferase (317 aa).

21 to 28 (GPTASGKS) is a binding site for ATP. Residue 23–28 (TASGKS) participates in substrate binding. Residues 46–49 (DSMQ) form an interaction with substrate tRNA region.

The protein belongs to the IPP transferase family. In terms of assembly, monomer. The cofactor is Mg(2+).

It carries out the reaction adenosine(37) in tRNA + dimethylallyl diphosphate = N(6)-dimethylallyladenosine(37) in tRNA + diphosphate. In terms of biological role, catalyzes the transfer of a dimethylallyl group onto the adenine at position 37 in tRNAs that read codons beginning with uridine, leading to the formation of N6-(dimethylallyl)adenosine (i(6)A). In Nitrobacter hamburgensis (strain DSM 10229 / NCIMB 13809 / X14), this protein is tRNA dimethylallyltransferase.